Consider the following 182-residue polypeptide: ADP-ribosylation factor-like protein 3 (182 aa).

The N-myristoyl glycine moiety is linked to residue G2. GTP contacts are provided by residues 24–31 (GLDNGGKT), 67–71 (DIGGQ), and 126–129 (NKQD).

It belongs to the small GTPase superfamily. Arf family.

Its subcellular location is the golgi apparatus membrane. It localises to the cytoplasm. The protein resides in the cytoskeleton. The protein localises to the spindle. It is found in the nucleus. Its subcellular location is the microtubule organizing center. It localises to the centrosome. The protein resides in the cell projection. The protein localises to the cilium. Functionally, small GTP-binding protein which cycles between an inactive GDP-bound and an active GTP-bound form, and the rate of cycling is regulated by guanine nucleotide exchange factors (GEF) and GTPase-activating proteins (GAP). Required for normal cytokinesis and cilia signaling. Required for targeting proteins to the ciliary membrane by releasing myristoylated protein from unc119 cargo adapters into the cilium. In Danio rerio (Zebrafish), this protein is ADP-ribosylation factor-like protein 3 (arl3).